The sequence spans 252 residues: Phosphate import ATP-binding protein PstB (252 aa).

The 242-residue stretch at 6 to 247 (ISAENLNLFY…PKDQRTEDYI (242 aa)) folds into the ABC transporter domain. An ATP-binding site is contributed by 38 to 45 (GPSGCGKS).

Belongs to the ABC transporter superfamily. Phosphate importer (TC 3.A.1.7) family. As to quaternary structure, the complex is composed of two ATP-binding proteins (PstB), two transmembrane proteins (PstC and PstA) and a solute-binding protein (PstS).

It is found in the cell membrane. The catalysed reaction is phosphate(out) + ATP + H2O = ADP + 2 phosphate(in) + H(+). Functionally, part of the ABC transporter complex PstSACB involved in phosphate import. Responsible for energy coupling to the transport system. The sequence is that of Phosphate import ATP-binding protein PstB from Heliobacterium mobile (Heliobacillus mobilis).